We begin with the raw amino-acid sequence, 371 residues long: Peptide chain release factor 2 (371 aa).

Gln253 carries the post-translational modification N5-methylglutamine.

It belongs to the prokaryotic/mitochondrial release factor family. Methylated by PrmC. Methylation increases the termination efficiency of RF2.

It localises to the cytoplasm. Its function is as follows. Peptide chain release factor 2 directs the termination of translation in response to the peptide chain termination codons UGA and UAA. The protein is Peptide chain release factor 2 of Mycobacterium sp. (strain KMS).